A 329-amino-acid chain; its full sequence is DGAT1/2-independent enzyme synthesizing storage lipids (329 aa).

Residues 1-50 are Lumenal-facing; it reads MIDNNQTCAAGQDSVPYVTCMIYVLEEWLGVEQLEDYLNFANHLLWVFTP. N5 carries an N-linked (GlcNAc...) asparagine glycan. Residues 51–71 form a helical membrane-spanning segment; sequence LILLILPYFTIFLLYLTIIFL. Over 72–120 the chain is Cytoplasmic; the sequence is HIYKRKNVLKEAYSHNLWDGARKTVATLWDGHAAVWHGYEVHGMEKIPE. Residues 121-141 form a helical membrane-spanning segment; the sequence is GAALIIFYHGAIPIDFYYFMA. Residue H129 is part of the active site. Topologically, residues 142 to 329 are lumenal; that stretch reads KIFIQKGRTC…DRFHKEQKAH (188 aa).

This sequence belongs to the diacylglycerol acyltransferase family. Highly divergent. In terms of tissue distribution, widely expressed, with highest level in the brain, followed by lung and duodenum, and lowest levels in tongue, testis, skin and ileum.

Its subcellular location is the endoplasmic reticulum membrane. The catalysed reaction is a 1,2-diacylglycerol + a 1,2-diacyl-sn-glycero-3-phosphocholine = a triacylglycerol + a 1-acyl-sn-glycero-3-phosphocholine. It catalyses the reaction a 1-O-alkyl-2-acyl-sn-glycero-3-phosphocholine + a 1,2-diacylglycerol = a 1-O-alkyl-sn-glycero-3-phosphocholine + a triacylglycerol. The enzyme catalyses a 2-acylglycerol + an acyl-CoA = a 1,2-diacylglycerol + CoA. It carries out the reaction an acyl-CoA + a 1,2-diacyl-sn-glycerol = a triacyl-sn-glycerol + CoA. The catalysed reaction is 2-(9Z-octadecenoyl)-glycerol + (9Z)-octadecenoyl-CoA = 1,2-di-(9Z-octadecenoyl)-glycerol + CoA. It catalyses the reaction 1,2-di-(9Z-octadecenoyl)-sn-glycerol + (9Z)-octadecenoyl-CoA = 1,2,3-tri-(9Z-octadecenoyl)-glycerol + CoA. Acyltransferase activity is specifically inhibited by TMX1 at the endoplasmic reticulum, restricting accumulation of triacylglycerol. Functionally, catalytic subunit of the alternative triglyceride biosynthesis pathway, which mediates formation of triacylglycerol from diacylglycerol and membrane phospholipids. Synthesizes triacylglycerol at the expense of membrane phospholipids, such as phosphatidylcholine (PC) and its ether-linked form (ePC), thereby altering the composition of membranes. The alternative triglyceride biosynthesis pathway is probably required to provide the energy required for rapid growth when fuel sources are limiting. It maintains mitochondrial function during periods of extracellular lipid starvation. Can also use acyl-CoA as donor: acts as a acyl-CoA:monoacylglycerol acyltransferase (MGAT), but also shows acyl-CoA:diacylglycerol acyltransferase (DGAT) activity. This Mus musculus (Mouse) protein is DGAT1/2-independent enzyme synthesizing storage lipids.